We begin with the raw amino-acid sequence, 400 residues long: Subtilisin-like protease 7 (400 aa).

The first 20 residues, 1-20 (MGFITKAIPLALAAASVING), serve as a signal peptide directing secretion. Positions 21 to 119 (AEILETRAGV…IERDARVQIN (99 aa)) are excised as a propeptide. In terms of domain architecture, Inhibitor I9 spans 36–118 (KYIVVMNDGI…YIERDARVQI (83 aa)). Residues 129-400 (SWGLARVGSK…SKLINNGSGM (272 aa)) enclose the Peptidase S8 domain. Residues Asp-161 and His-192 each act as charge relay system in the active site. N-linked (GlcNAc...) asparagine glycosylation is found at Asn-222 and Asn-252. The active-site Charge relay system is Ser-346. N-linked (GlcNAc...) asparagine glycosylation occurs at Asn-396.

This sequence belongs to the peptidase S8 family.

It is found in the secreted. Secreted subtilisin-like serine protease with keratinolytic activity that contributes to pathogenicity. This chain is Subtilisin-like protease 7 (SUB7), found in Trichophyton soudanense.